The following is a 353-amino-acid chain: Photosystem II protein D1 (353 aa).

At T2 the chain carries N-acetylthreonine. T2 carries the post-translational modification Phosphothreonine. 3 helical membrane passes run 29–46, 118–133, and 142–156; these read YIGWFGVLMIPLLLTATS, HFLLGVCCYMGREWEL, and WIAVAYSAPVAAATA. H118 contacts chlorophyll a. Y126 contacts pheophytin a. [CaMn4O5] cluster contacts are provided by D170 and E189. A helical membrane pass occupies residues 197-218; the sequence is FHMLGVAGVFGGSLFSAMHGSL. H198 is a chlorophyll a binding site. A quinone is bound by residues H215 and 264–265; that span reads SF. Fe cation is bound at residue H215. H272 contacts Fe cation. Residues 274 to 288 form a helical membrane-spanning segment; it reads FLAAWPVIGIWFTAL. [CaMn4O5] cluster contacts are provided by H332, E333, D342, and A344. Positions 345–353 are excised as a propeptide; that stretch reads SVEAPSVNG.

Belongs to the reaction center PufL/M/PsbA/D family. As to quaternary structure, PSII is composed of 1 copy each of membrane proteins PsbA, PsbB, PsbC, PsbD, PsbE, PsbF, PsbH, PsbI, PsbJ, PsbK, PsbL, PsbM, PsbT, PsbX, PsbY, PsbZ, Psb30/Ycf12, at least 3 peripheral proteins of the oxygen-evolving complex and a large number of cofactors. It forms dimeric complexes. It depends on The D1/D2 heterodimer binds P680, chlorophylls that are the primary electron donor of PSII, and subsequent electron acceptors. It shares a non-heme iron and each subunit binds pheophytin, quinone, additional chlorophylls, carotenoids and lipids. D1 provides most of the ligands for the Mn4-Ca-O5 cluster of the oxygen-evolving complex (OEC). There is also a Cl(-1) ion associated with D1 and D2, which is required for oxygen evolution. The PSII complex binds additional chlorophylls, carotenoids and specific lipids. as a cofactor. Tyr-161 forms a radical intermediate that is referred to as redox-active TyrZ, YZ or Y-Z. Post-translationally, C-terminally processed by CTPA; processing is essential to allow assembly of the oxygen-evolving complex and thus photosynthetic growth.

The protein localises to the plastid. It localises to the chloroplast thylakoid membrane. The enzyme catalyses 2 a plastoquinone + 4 hnu + 2 H2O = 2 a plastoquinol + O2. Photosystem II (PSII) is a light-driven water:plastoquinone oxidoreductase that uses light energy to abstract electrons from H(2)O, generating O(2) and a proton gradient subsequently used for ATP formation. It consists of a core antenna complex that captures photons, and an electron transfer chain that converts photonic excitation into a charge separation. The D1/D2 (PsbA/PsbD) reaction center heterodimer binds P680, the primary electron donor of PSII as well as several subsequent electron acceptors. This Chlorokybus atmophyticus (Soil alga) protein is Photosystem II protein D1.